Here is a 309-residue protein sequence, read N- to C-terminus: Taste receptor type 2 member 31 (309 aa).

Residues 1 to 2 (MT) are Extracellular-facing. A helical membrane pass occupies residues 3 to 23 (TFIPIIFSSLVMVMFVTGNFA). The Cytoplasmic segment spans residues 24–55 (NGFIALVNSIESVKRQKISYADQILTALAVSR). Residues 56–76 (IGLLWVLLLNWYSTVLNPAFY) form a helical membrane-spanning segment. Residues 77 to 100 (SVEVRTTAYNVWAVTGHFSNWLAT) are Extracellular-facing. A helical membrane pass occupies residues 101–121 (SLSIFYLLKIANFSNLIFLHL). The Cytoplasmic segment spans residues 122–126 (KRRVK). Residues 127 to 147 (SVILVMLLGPLLFLACQLFVI) form a helical membrane-spanning segment. At 148–181 (NMKEIVQTKEYEGNXTWKIKLRSAVYLSDATVTT) the chain is on the extracellular side. N-linked (GlcNAc...) asparagine glycosylation occurs at asparagine 161. Residues 182-202 (LGNLVPFTLTLLCFLLLICSL) traverse the membrane as a helical segment. The Cytoplasmic portion of the chain corresponds to 203 to 229 (CKHLKKMQLHGKGSQDPSMKVHIKALQ). Residues 230 to 250 (TVTSFLLLCAIYFLSIMISVW) traverse the membrane as a helical segment. The Extracellular portion of the chain corresponds to 251–259 (SLGSLKNKP). The chain crosses the membrane as a helical span at residues 260 to 280 (VFMFCKAMRFSYPSIHPFILI). Residues 281–309 (WGNKKLKQTFLSVLQQVRYWVKGEKPSSP) are Cytoplasmic-facing.

Belongs to the G-protein coupled receptor T2R family.

It is found in the membrane. Receptor that may play a role in the perception of bitterness and is gustducin-linked. May play a role in sensing the chemical composition of the gastrointestinal content. The activity of this receptor may stimulate alpha gustducin, mediate PLC-beta-2 activation and lead to the gating of TRPM5. This chain is Taste receptor type 2 member 31 (TAS2R31), found in Gorilla gorilla gorilla (Western lowland gorilla).